An 83-amino-acid polypeptide reads, in one-letter code: Subtilisin-chymotrypsin inhibitor CI-1B (83 aa).

A disordered region spans residues 1-28; that stretch reads MRSMEGSVPKYPEPTEGSIGASGAKRSW.

It belongs to the protease inhibitor I13 (potato type I serine protease inhibitor) family.

Functionally, inhibits both subtilisin and chymotrypsin. This chain is Subtilisin-chymotrypsin inhibitor CI-1B, found in Hordeum vulgare (Barley).